A 587-amino-acid polypeptide reads, in one-letter code: RuBisCO large subunit-binding protein subunit alpha, chloroplastic (587 aa).

Positions 1 to 25 (MASTNALSSTSILRSPTNQAQTSLS) are enriched in polar residues. The tract at residues 1–33 (MASTNALSSTSILRSPTNQAQTSLSKKVKQHGR) is disordered. The transit peptide at 1–47 (MASTNALSSTSILRSPTNQAQTSLSKKVKQHGRVNFRQKPNRFVVKA) directs the protein to the chloroplast.

It belongs to the chaperonin (HSP60) family. Oligomer of probably six alpha and six beta subunits.

It localises to the plastid. The protein localises to the chloroplast. Its function is as follows. This protein binds RuBisCO small and large subunits and is implicated in the assembly of the enzyme oligomer. The protein is RuBisCO large subunit-binding protein subunit alpha, chloroplastic of Pisum sativum (Garden pea).